We begin with the raw amino-acid sequence, 62 residues long: Small ribosomal subunit protein uS14 (62 aa).

Zn(2+) contacts are provided by Cys25, Cys28, Cys41, and Cys44.

This sequence belongs to the universal ribosomal protein uS14 family. Zinc-binding uS14 subfamily. As to quaternary structure, part of the 30S ribosomal subunit. Contacts proteins S3 and S10. Zn(2+) serves as cofactor.

In terms of biological role, binds 16S rRNA, required for the assembly of 30S particles and may also be responsible for determining the conformation of the 16S rRNA at the A site. This chain is Small ribosomal subunit protein uS14, found in Persephonella marina (strain DSM 14350 / EX-H1).